A 289-amino-acid chain; its full sequence is Ribosomal RNA small subunit methyltransferase A (289 aa).

The S-adenosyl-L-methionine site is built by N28, L30, G55, E77, D103, and N122.

Belongs to the class I-like SAM-binding methyltransferase superfamily. rRNA adenine N(6)-methyltransferase family. RsmA subfamily.

The protein resides in the cytoplasm. It catalyses the reaction adenosine(1518)/adenosine(1519) in 16S rRNA + 4 S-adenosyl-L-methionine = N(6)-dimethyladenosine(1518)/N(6)-dimethyladenosine(1519) in 16S rRNA + 4 S-adenosyl-L-homocysteine + 4 H(+). Its function is as follows. Specifically dimethylates two adjacent adenosines (A1518 and A1519) in the loop of a conserved hairpin near the 3'-end of 16S rRNA in the 30S particle. May play a critical role in biogenesis of 30S subunits. In Jannaschia sp. (strain CCS1), this protein is Ribosomal RNA small subunit methyltransferase A.